The following is a 175-amino-acid chain: Disulfide bond formation protein B (175 aa).

Topologically, residues methionine 1–alanine 13 are cytoplasmic. A helical transmembrane segment spans residues tryptophan 14 to tyrosine 30. Residues phenylalanine 31–valine 48 are Periplasmic-facing. Cysteine 40 and cysteine 43 are oxidised to a cystine. Residues alanine 49 to proline 64 traverse the membrane as a helical segment. At arginine 65 to phenylalanine 71 the chain is on the cytoplasmic side. A helical transmembrane segment spans residues leucine 72–phenylalanine 89. Over glutamate 90 to glutamine 144 the chain is Periplasmic. Cysteine 104 and cysteine 130 are oxidised to a cystine. Residues tryptophan 145 to proline 163 form a helical membrane-spanning segment. The Cytoplasmic portion of the chain corresponds to glycine 164–serine 175.

The protein belongs to the DsbB family.

The protein localises to the cell inner membrane. Functionally, required for disulfide bond formation in some periplasmic proteins. Acts by oxidizing the DsbA protein. The sequence is that of Disulfide bond formation protein B from Shewanella denitrificans (strain OS217 / ATCC BAA-1090 / DSM 15013).